Here is a 348-residue protein sequence, read N- to C-terminus: Adenosine deaminase (348 aa).

His-16 and His-18 together coordinate Zn(2+). Substrate-binding residues include His-18, Asp-20, and Gly-174. His-201 contacts Zn(2+). Residue Glu-204 is the Proton donor of the active site. Asp-282 contributes to the Zn(2+) binding site.

It belongs to the metallo-dependent hydrolases superfamily. Adenosine and AMP deaminases family. Adenosine deaminase subfamily. Requires Zn(2+) as cofactor.

The catalysed reaction is adenosine + H2O + H(+) = inosine + NH4(+). The enzyme catalyses 2'-deoxyadenosine + H2O + H(+) = 2'-deoxyinosine + NH4(+). In terms of biological role, catalyzes the hydrolytic deamination of adenosine and 2-deoxyadenosine. The chain is Adenosine deaminase from Clostridium kluyveri (strain ATCC 8527 / DSM 555 / NBRC 12016 / NCIMB 10680 / K1).